The chain runs to 473 residues: Photosystem II CP43 reaction center protein (473 aa).

A propeptide spanning residues 1–14 (MKTLYSLRRFYHVE) is cleaved from the precursor. Threonine 15 is modified (N-acetylthreonine). Residue threonine 15 is modified to Phosphothreonine. 5 helical membrane passes run 69-93 (LFEV…PHLA), 134-155 (LLGP…KDRN), 178-200 (KAFY…RKIT), 255-275 (KPFA…LSYS), and 291-312 (WFNN…ASQA). Glutamate 367 is a [CaMn4O5] cluster binding site. The chain crosses the membrane as a helical span at residues 447–471 (RARAAAAGFEKGIDRDFEPVLSMTP).

Belongs to the PsbB/PsbC family. PsbC subfamily. As to quaternary structure, PSII is composed of 1 copy each of membrane proteins PsbA, PsbB, PsbC, PsbD, PsbE, PsbF, PsbH, PsbI, PsbJ, PsbK, PsbL, PsbM, PsbT, PsbX, PsbY, PsbZ, Psb30/Ycf12, at least 3 peripheral proteins of the oxygen-evolving complex and a large number of cofactors. It forms dimeric complexes. Binds multiple chlorophylls and provides some of the ligands for the Ca-4Mn-5O cluster of the oxygen-evolving complex. It may also provide a ligand for a Cl- that is required for oxygen evolution. PSII binds additional chlorophylls, carotenoids and specific lipids. serves as cofactor.

Its subcellular location is the plastid. It localises to the chloroplast thylakoid membrane. Functionally, one of the components of the core complex of photosystem II (PSII). It binds chlorophyll and helps catalyze the primary light-induced photochemical processes of PSII. PSII is a light-driven water:plastoquinone oxidoreductase, using light energy to abstract electrons from H(2)O, generating O(2) and a proton gradient subsequently used for ATP formation. This chain is Photosystem II CP43 reaction center protein, found in Pisum sativum (Garden pea).